The following is a 131-amino-acid chain: Small ribosomal subunit protein uS8 (131 aa).

Belongs to the universal ribosomal protein uS8 family. As to quaternary structure, part of the 30S ribosomal subunit. Contacts proteins S5 and S12.

In terms of biological role, one of the primary rRNA binding proteins, it binds directly to 16S rRNA central domain where it helps coordinate assembly of the platform of the 30S subunit. The chain is Small ribosomal subunit protein uS8 from Chromobacterium violaceum (strain ATCC 12472 / DSM 30191 / JCM 1249 / CCUG 213 / NBRC 12614 / NCIMB 9131 / NCTC 9757 / MK).